The following is a 324-amino-acid chain: Anthranilate phosphoribosyltransferase (324 aa).

Residues G72, 75–76 (GD), T80, 82–85 (NVST), 99–107 (KHGNVSVTS), and S111 contribute to the 5-phospho-alpha-D-ribose 1-diphosphate site. Residue G72 participates in anthranilate binding. S84 contacts Mg(2+). N102 provides a ligand contact to anthranilate. Residue R157 coordinates anthranilate. Mg(2+) contacts are provided by D215 and E216.

It belongs to the anthranilate phosphoribosyltransferase family. As to quaternary structure, homodimer. The cofactor is Mg(2+).

It carries out the reaction N-(5-phospho-beta-D-ribosyl)anthranilate + diphosphate = 5-phospho-alpha-D-ribose 1-diphosphate + anthranilate. The protein operates within amino-acid biosynthesis; L-tryptophan biosynthesis; L-tryptophan from chorismate: step 2/5. In terms of biological role, catalyzes the transfer of the phosphoribosyl group of 5-phosphorylribose-1-pyrophosphate (PRPP) to anthranilate to yield N-(5'-phosphoribosyl)-anthranilate (PRA). This chain is Anthranilate phosphoribosyltransferase, found in Pyrococcus furiosus (strain ATCC 43587 / DSM 3638 / JCM 8422 / Vc1).